Reading from the N-terminus, the 370-residue chain is 3-dehydroquinate synthase (370 aa).

NAD(+) is bound by residues 107–111 (GVIGD), 131–132 (TS), K144, and K153. 3 residues coordinate Zn(2+): E186, H249, and H267.

It belongs to the sugar phosphate cyclases superfamily. Dehydroquinate synthase family. Co(2+) is required as a cofactor. Requires Zn(2+) as cofactor. The cofactor is NAD(+).

The protein resides in the cytoplasm. The enzyme catalyses 7-phospho-2-dehydro-3-deoxy-D-arabino-heptonate = 3-dehydroquinate + phosphate. Its pathway is metabolic intermediate biosynthesis; chorismate biosynthesis; chorismate from D-erythrose 4-phosphate and phosphoenolpyruvate: step 2/7. Its function is as follows. Catalyzes the conversion of 3-deoxy-D-arabino-heptulosonate 7-phosphate (DAHP) to dehydroquinate (DHQ). The chain is 3-dehydroquinate synthase from Jannaschia sp. (strain CCS1).